The sequence spans 321 residues: Basic peroxidase (321 aa).

A signal peptide spans 1-30; the sequence is MSYHKSSGTILMVPLFMLLISVNYFMSCNA. At Q31 the chain carries Pyrrolidone carboxylic acid. 4 disulfide bridges follow: C41/C117, C74/C79, C123/C317, and C202/C228. The active-site Proton acceptor is the H72. Ca(2+) is bound by residues D73, V76, G78, D80, and S82. P165 is a substrate binding site. H195 is a heme b binding site. Residue T196 participates in Ca(2+) binding. Residues N211 and N221 are each glycosylated (N-linked (GlcNAc...) asparagine). Residues D241, T244, and D249 each contribute to the Ca(2+) site.

This sequence belongs to the peroxidase family. Classical plant (class III) peroxidase subfamily. It depends on heme b as a cofactor. Ca(2+) is required as a cofactor. Post-translationally, N-glycosylated. In terms of tissue distribution, expressed in tracheary elements, roots, young and old hypocotyls, and stems in the partially glycosylated form and in roots and young hypocotyls in the fully glycosylated form. None of the isoforms is significantly expressed in leaves or cotyledons.

The protein resides in the secreted. It carries out the reaction 2 a phenolic donor + H2O2 = 2 a phenolic radical donor + 2 H2O. Functionally, removal of H(2)O(2), oxidation of toxic reductants, biosynthesis and degradation of lignin, suberization, auxin catabolism, response to environmental stresses such as wounding, pathogen attack and oxidative stress. These functions might be dependent on each isozyme/isoform in each plant tissue. Involved in the synthesis of highly polymerized lignins. In Zinnia elegans (Garden zinnia), this protein is Basic peroxidase (POD1).